The chain runs to 295 residues: Ent-pimara-9(11),15-diene synthase (295 aa).

The protein belongs to the terpene synthase family. Monomer. The cofactor is a divalent metal cation.

The enzyme catalyses ent-copalyl diphosphate = ent-pimara-9(11),15-diene + diphosphate. It participates in antibiotic biosynthesis. Functionally, involved in viguiepinol biosynthesis. Catalyzes the conversion of copalyl diphosphate (ent-CDP) into pimara-9(11),15-diene (PMD). The sequence is that of Ent-pimara-9(11),15-diene synthase from Streptomyces sp. (strain KO-3988).